The primary structure comprises 245 residues: Protein ARV 1 (245 aa).

The next 5 membrane-spanning stretches (helical) occupy residues 70-90, 117-137, 163-183, 200-220, and 224-244; these read INPATVNIQHLLWKLVFAYLL, IKVLIGVLSANAAFIISFAIA, IFLLAMLVWEFPMSVIFFVDI, TMTRCIAVCLIAHLIRFLVGQ, and PTIFLIQIGSLLQYMSYFFRI.

Belongs to the ARV1 family. In terms of tissue distribution, restricted to tissues in which cells are actively dividing or expanding. Mostly expressed in roots and flowers, and, to a lower extent, in stems and leaves.

It localises to the endoplasmic reticulum membrane. Mediator of sterol homeostasis involved in sterol uptake, trafficking and distribution into membranes. Also regulates the sphingolipid metabolism. This chain is Protein ARV 1, found in Arabidopsis thaliana (Mouse-ear cress).